Here is a 2344-residue protein sequence, read N- to C-terminus: Genome polyprotein (2344 aa).

The region spanning 492–653 is the SF3 helicase domain; it reads QKVISDLHTM…ESWQATRHGS (162 aa). 522 to 529 contacts ATP; that stretch reads GAPGIGKT. An O-(5'-phospho-RNA)-tyrosine modification is found at tyrosine 1014. Residue tyrosine 1014 is modified to O-UMP-tyrosine; transient. In terms of domain architecture, Peptidase C24 spans 1109–1244; it reads GLPGFMRHNG…SKMCTLIDLT (136 aa). Residues histidine 1135, aspartate 1152, and cysteine 1212 each act as for 3CLpro activity in the active site. One can recognise a RdRp catalytic domain in the interval 1495–1619; it reads SDFLCLDYSK…AMTPMMVSLL (125 aa). Cysteine 1584 and cysteine 1591 are oxidised to a cystine. The disordered stretch occupies residues 1771–1796; that stretch reads RTAPQGEAAGTATTASVPGTTTDGMD. Residues 1778 to 1794 show a composition bias toward low complexity; sequence AAGTATTASVPGTTTDG.

Homodimer. As to quaternary structure, homomultimer. Interacts with host type II histo-blood group structures antigens at the surface of target cells. Mn(2+) serves as cofactor. Specific enzymatic cleavages by its own cysteine protease yield mature proteins. The protease cleaves itself from the nascent polyprotein autocatalytically. Precursor p41 can be cleaved by viral 3CLpro into protein p19 and VPg, or cleaved by host protease into protein p23/2 and protein p18. In terms of processing, VPg is uridylylated by the polymerase and is covalently attached to the 5'-end of the polyadenylated genomic and subgenomic RNAs. This uridylylated form acts as a nucleotide-peptide primer for the polymerase.

The protein localises to the host cytoplasm. Its subcellular location is the host endoplasmic reticulum. It is found in the virion. The enzyme catalyses a ribonucleoside 5'-triphosphate + H2O = a ribonucleoside 5'-diphosphate + phosphate + H(+). It catalyses the reaction Endopeptidase with a preference for cleavage when the P1 position is occupied by Glu-|-Xaa and the P1' position is occupied by Gly-|-Yaa.. The catalysed reaction is RNA(n) + a ribonucleoside 5'-triphosphate = RNA(n+1) + diphosphate. In terms of biological role, together with NTPase and NS4, initiates the formation of the replication complex. Induces the proliferation of the host smooth ER membranes forming long tubular structures. These remodeled membranes probably form the viral factories that contain the replication complex. Its function is as follows. Displays NTPase activity, but no helicase activity. Induces the formation of convoluted membranes derived from the host ER. These remodeled membranes probably form the viral factories that contain the replication complex. Together with NS2 and NS4, initiates the formation of the replication complex. Probable key protein responsible for the formation of membrane alterations by the virus. Induces the formation of convoluted membranes derived from the host ER. These remodeled membranes probably form the viral factories that contain the replication complex. Together with NS2 and NTPase, initiates the formation of the replication complex. Functionally, viral genome-linked protein is covalently linked to the 5'-end of the positive-strand, negative-strand genomic RNAs and subgenomic RNA. Acts as a genome-linked replication primer. May recruit ribosome to viral RNA thereby promoting viral proteins translation. Interacts with host translation initiation complex to allow the translation of viral proteins. In terms of biological role, processes the polyprotein. 3CLpro-RdRp is first released by autocleavage, then all other proteins are cleaved. May cleave polyadenylate-binding protein thereby inhibiting cellular translation. Its function is as follows. Replicates genomic and antigenomic RNA by recognizing replications specific signals. Also transcribes a subgenomic mRNA by initiating RNA synthesis internally on antigenomic RNA. This sgRNA codes for structural proteins. Catalyzes the covalent attachment VPg with viral RNAs. Capsid protein VP60 self assembles to form an icosahedral capsid with a T=3 symmetry, about 35 nm in diameter, and consisting of 180 capsid proteins. A smaller form of capsid with a diameter of 23 nm might be capsid proteins assembled as icosahedron with T=1 symmetry. The capsid encapsulate VP2 proteins and genomic or subgenomic RNA. Attaches virion to target cells by binding histo-blood group antigens, inducing endocytosis of the viral particle. Acidification of the endosome induces conformational change of capsid protein thereby injecting virus genomic RNA into host cytoplasm. The sequence is that of Genome polyprotein from Rabbit hemorrhagic disease virus (strain SD) (Ra/LV/RHDV/SD/1989/FR).